The following is a 201-amino-acid chain: Ras-related protein RabA (201 aa).

Position 15-22 (15-22 (GDSGVGKS)) interacts with GTP. The short motif at 37 to 45 (YISTIGVDF) is the Effector region element. Residues 63–67 (DTAGQ) and 121–124 (NKSD) each bind GTP. Position 198 is a cysteine methyl ester (Cys198). Cys198 carries S-geranylgeranyl cysteine lipidation. Positions 199 to 201 (IIN) are cleaved as a propeptide — removed in mature form.

It belongs to the small GTPase superfamily. Rab family.

It is found in the cell membrane. This chain is Ras-related protein RabA (rabA), found in Dictyostelium discoideum (Social amoeba).